The primary structure comprises 304 residues: Capsid protein (304 aa).

2 stretches are compositionally biased toward basic and acidic residues: residues 1 to 24 (MGDS…REAR) and 32 to 54 (FEGK…EMSL). The tract at residues 1–54 (MGDSTKKAETAKDEGTSQERREARPLPTAADFEGKDTSENTDGRAADADGEMSL) is disordered.

The protein belongs to the potexviruses coat protein family.

It is found in the virion. Required for genome encapsidation. Forms ribonucleoprotein complexes along with TGB1 helicase and viral RNA. This is Capsid protein from Potato virus M (strain Russian) (PVM).